Consider the following 298-residue polypeptide: Inosose dehydratase (298 aa).

It belongs to the IolE/MocC family. Glutathione is required as a cofactor. The cofactor is Co(2+). It depends on Mn(2+) as a cofactor.

It carries out the reaction scyllo-inosose = 3D-3,5/4-trihydroxycyclohexane-1,2-dione + H2O. It functions in the pathway polyol metabolism; myo-inositol degradation into acetyl-CoA; acetyl-CoA from myo-inositol: step 2/7. In terms of biological role, catalyzes the dehydration of inosose (2-keto-myo-inositol, 2KMI or 2,4,6/3,5-pentahydroxycyclohexanone) to 3D-(3,5/4)-trihydroxycyclohexane-1,2-dione (D-2,3-diketo-4-deoxy-epi-inositol). The chain is Inosose dehydratase from Clostridium tetani (strain Massachusetts / E88).